The sequence spans 127 residues: Large ribosomal subunit protein bL17 (127 aa).

It belongs to the bacterial ribosomal protein bL17 family. Part of the 50S ribosomal subunit. Contacts protein L32.

This chain is Large ribosomal subunit protein bL17, found in Pelobacter propionicus (strain DSM 2379 / NBRC 103807 / OttBd1).